A 660-amino-acid chain; its full sequence is tRNA 5-methylaminomethyl-2-thiouridine biosynthesis bifunctional protein MnmC (660 aa).

The tract at residues 1–242 (MTDRIVPATL…KRAMLVGEFA (242 aa)) is tRNA (mnm(5)s(2)U34)-methyltransferase. An FAD-dependent cmnm(5)s(2)U34 oxidoreductase region spans residues 266-660 (IGAGLAGCAV…VRALRHGRVA (395 aa)).

It in the N-terminal section; belongs to the methyltransferase superfamily. tRNA (mnm(5)s(2)U34)-methyltransferase family. The protein in the C-terminal section; belongs to the DAO family. The cofactor is FAD.

The protein localises to the cytoplasm. The enzyme catalyses 5-aminomethyl-2-thiouridine(34) in tRNA + S-adenosyl-L-methionine = 5-methylaminomethyl-2-thiouridine(34) in tRNA + S-adenosyl-L-homocysteine + H(+). Its function is as follows. Catalyzes the last two steps in the biosynthesis of 5-methylaminomethyl-2-thiouridine (mnm(5)s(2)U) at the wobble position (U34) in tRNA. Catalyzes the FAD-dependent demodification of cmnm(5)s(2)U34 to nm(5)s(2)U34, followed by the transfer of a methyl group from S-adenosyl-L-methionine to nm(5)s(2)U34, to form mnm(5)s(2)U34. The polypeptide is tRNA 5-methylaminomethyl-2-thiouridine biosynthesis bifunctional protein MnmC (Burkholderia pseudomallei (strain K96243)).